The chain runs to 66 residues: Phylloseptin-Az3 (66 aa).

An N-terminal signal peptide occupies residues 1-22 (MAFLKKSLFLVLFLGLVSLSIC). Residues 23–44 (EEEKRETEEEEYNQEDDDKSEE) constitute a propeptide that is removed on maturation. Phe65 carries the phenylalanine amide modification.

In terms of tissue distribution, expressed by the skin glands.

It is found in the secreted. Functionally, has antimicrobial activity. The protein is Phylloseptin-Az3 of Pithecopus azureus (Orange-legged monkey tree frog).